We begin with the raw amino-acid sequence, 793 residues long: MADDFITTIDSDDEVSNYGEPSALPKIKDDELDPDFQFDLGGGRSEGLDLWGGDEVQGVKKGNEPINVDDIIERKRGKPIRAFKDRKRKRDEDATSEDDLEEDEEEEGDSNDDSDAAKSGDSEEDEMDVDMSEGDGDEEDENEIESLKREDESDEEEEEEEDDYDEEGENEVVDSDSESEEETAAEIARKDAFFSSDPTTTDPTLPSSFTAMNLSRPLLRALTSLQFTAPTPIQARAIPLALLGRDILGSAVTGSGKTAAFMVPILERLCYRDRGKGGAACRVLVLCPTRELAVQCEAVGKALAEKGGLDVRFALLVGGLSLNAQAHTLRTLPDILIATPGRLIDHLTNTPSFTLSALDVLVIDEADRMLEAGFTDELEEIIKACPRSRQTMLFSATMTDSVDELVKLSLDKPIRVFVDPKRNTARGLTQEFVRIRSDDSRSPSLLALCKRTIREKCIIFFRSKALAHQMRIVFGLFGLKAAELHGNLTQEQRLQALNDFKAGTVDYLLATDLASRGLDIKGVETVINYDMPGQLAQYTHRVGRTARAGRKGRSVSLVGEADRKMLKAAIKQAEADQVRHRIIPSEAVTAMKEKLEEFKDDIQEILKEEKEEKLLRQADMEIKKGQNMVEHEAEIFSRPARTWFQSGKEKQASKSAGKDAYVGSFPSTGKSAEKEKEKLKRGKYDGLSRRLKRRKMAIEEDAADAAAARKTEMGIRAAKKNALPKKITEPQPRLEKAGKGKDKKKGKARRVTGGKGSAFDSEGKKSHEGMRAKPAKVNLEKGKKKGGKGKGRK.

The interval 1–208 is disordered; that stretch reads MADDFITTID…TTTDPTLPSS (208 aa). Residues 75–89 are compositionally biased toward basic residues; that stretch reads KRGKPIRAFKDRKRK. Composition is skewed to acidic residues over residues 94–114, 122–144, and 152–184; these read ATSE…NDDS, SEED…ENEI, and ESDE…EETA. A compositionally biased stretch (low complexity) spans 193–208; it reads FFSSDPTTTDPTLPSS. Residues 207 to 235 carry the Q motif motif; that stretch reads SSFTAMNLSRPLLRALTSLQFTAPTPIQA. Positions 238–416 constitute a Helicase ATP-binding domain; it reads IPLALLGRDI…KLSLDKPIRV (179 aa). 251–258 lines the ATP pocket; sequence AVTGSGKT. A DEAD box motif is present at residues 364–367; sequence DEAD. The 180-residue stretch at 427–606 folds into the Helicase C-terminal domain; it reads GLTQEFVRIR…EFKDDIQEIL (180 aa). Residues 560-630 adopt a coiled-coil conformation; that stretch reads EADRKMLKAA…EIKKGQNMVE (71 aa). The tract at residues 645 to 793 is disordered; it reads QSGKEKQASK…KKGGKGKGRK (149 aa). Composition is skewed to basic and acidic residues over residues 671-688 and 726-740; these read SAEK…DGLS and KITE…AGKG. Positions 741-752 are enriched in basic residues; the sequence is KDKKKGKARRVT. A compositionally biased stretch (basic and acidic residues) spans 761–771; it reads SEGKKSHEGMR. Residues 782–793 show a composition bias toward basic residues; that stretch reads GKKKGGKGKGRK.

This sequence belongs to the DEAD box helicase family. DDX27/DRS1 subfamily. Associates with pre-ribosomal particles.

The protein resides in the nucleus. Its subcellular location is the nucleolus. It catalyses the reaction ATP + H2O = ADP + phosphate + H(+). ATP-binding RNA helicase involved in ribosome assembly. The polypeptide is ATP-dependent RNA helicase DRS1 (DRS1) (Cryptococcus neoformans var. neoformans serotype D (strain JEC21 / ATCC MYA-565) (Filobasidiella neoformans)).